Reading from the N-terminus, the 459-residue chain is Bifunctional protein GlmU (459 aa).

The pyrophosphorylase stretch occupies residues 1-230; it reads MSNRFAVILA…FDETLGVNDR (230 aa). UDP-N-acetyl-alpha-D-glucosamine-binding positions include 9–12, K23, Q73, and 78–79; these read LAAG and GT. Residue D103 participates in Mg(2+) binding. Positions 140, 155, 170, and 228 each coordinate UDP-N-acetyl-alpha-D-glucosamine. N228 contacts Mg(2+). Residues 231 to 251 are linker; the sequence is VALSQAEVIMKNRINHKNMVN. The interval 252 to 459 is N-acetyltransferase; that stretch reads GVTIIDPSNT…VDQLLNKKKS (208 aa). R333 and K351 together coordinate UDP-N-acetyl-alpha-D-glucosamine. H363 (proton acceptor) is an active-site residue. UDP-N-acetyl-alpha-D-glucosamine is bound by residues Y366 and N377. Acetyl-CoA is bound by residues 386 to 387, A423, and R440; that span reads NY.

In the N-terminal section; belongs to the N-acetylglucosamine-1-phosphate uridyltransferase family. This sequence in the C-terminal section; belongs to the transferase hexapeptide repeat family. Homotrimer. The cofactor is Mg(2+).

It localises to the cytoplasm. The enzyme catalyses alpha-D-glucosamine 1-phosphate + acetyl-CoA = N-acetyl-alpha-D-glucosamine 1-phosphate + CoA + H(+). It catalyses the reaction N-acetyl-alpha-D-glucosamine 1-phosphate + UTP + H(+) = UDP-N-acetyl-alpha-D-glucosamine + diphosphate. The protein operates within nucleotide-sugar biosynthesis; UDP-N-acetyl-alpha-D-glucosamine biosynthesis; N-acetyl-alpha-D-glucosamine 1-phosphate from alpha-D-glucosamine 6-phosphate (route II): step 2/2. It functions in the pathway nucleotide-sugar biosynthesis; UDP-N-acetyl-alpha-D-glucosamine biosynthesis; UDP-N-acetyl-alpha-D-glucosamine from N-acetyl-alpha-D-glucosamine 1-phosphate: step 1/1. It participates in bacterial outer membrane biogenesis; LPS lipid A biosynthesis. In terms of biological role, catalyzes the last two sequential reactions in the de novo biosynthetic pathway for UDP-N-acetylglucosamine (UDP-GlcNAc). The C-terminal domain catalyzes the transfer of acetyl group from acetyl coenzyme A to glucosamine-1-phosphate (GlcN-1-P) to produce N-acetylglucosamine-1-phosphate (GlcNAc-1-P), which is converted into UDP-GlcNAc by the transfer of uridine 5-monophosphate (from uridine 5-triphosphate), a reaction catalyzed by the N-terminal domain. This chain is Bifunctional protein GlmU, found in Bacillus cytotoxicus (strain DSM 22905 / CIP 110041 / 391-98 / NVH 391-98).